The chain runs to 1571 residues: Guanine nucleotide-releasing factor 2 (1571 aa).

3 disordered regions span residues Leu28–Asn85, Ile202–Arg271, and Met287–Glu316. Residues Gln55 to Lys73 are compositionally biased toward basic residues. The segment covering Thr74–Asp83 has biased composition (polar residues). The span at Thr230 to Val248 shows a compositional bias: gly residues. A compositionally biased stretch (polar residues) spans Met287–Ser297. The span at His298–Thr309 shows a compositional bias: basic residues. A phosphoserine mark is found at Ser496 and Ser523. Disordered stretches follow at residues His513–Pro580, Arg614–Leu646, Gly695–Phe719, Ser728–Ser747, Gln776–Ala868, and Leu879–His898. Thr524 carries the post-translational modification Phosphothreonine. The residue at position 526 (Ser526) is a Phosphoserine. Positions Ser532–Pro550 are enriched in pro residues. Positions Pro546–Gln556 match the SH3-binding motif. Residues Gln556–Ser579 are compositionally biased toward low complexity. The residue at position 615 (Ser615) is a Phosphoserine. Polar residues predominate over residues Glu620–Asn631. Positions Gly697–Glu707 are enriched in low complexity. Over residues Thr708–Gly718 the composition is skewed to polar residues. 2 stretches are compositionally biased toward low complexity: residues Ser735–Ser747 and Ser780–Pro824. Positions Ala820–Ile831 match the SH3-binding motif. Residues Val851–Glu866 show a composition bias toward polar residues. 2 consecutive short sequence motifs (SH3-binding) follow at residues Asp924–Lys935 and Leu986–Tyr997. The disordered stretch occupies residues Pro1013–Ser1038. The N-terminal Ras-GEF domain occupies Asp1170 to Thr1292. A Ras-GEF domain is found at Lys1339–Arg1564.

Ubiquitous.

Its function is as follows. Guanine nucleotide-releasing protein that binds to SH3 domain of Crk. Transduces signals from Crk to activate RAS. Also involved in MAPK activation. This is Guanine nucleotide-releasing factor 2 (C3G) from Drosophila melanogaster (Fruit fly).